We begin with the raw amino-acid sequence, 106 residues long: uncharacterized protein (106 aa).

This is an uncharacterized protein from Pseudanabaena tenuis (strain PCC 7409).